The chain runs to 368 residues: tRNA 2-selenouridine synthase (368 aa).

A Rhodanese domain is found at 15 to 138 (MLSGHPMIDV…MRQYLIEVID (124 aa)). Residue cysteine 98 is the S-selanylcysteine intermediate of the active site.

It belongs to the SelU family. In terms of assembly, monomer.

It catalyses the reaction 5-methylaminomethyl-2-thiouridine(34) in tRNA + selenophosphate + (2E)-geranyl diphosphate + H2O + H(+) = 5-methylaminomethyl-2-selenouridine(34) in tRNA + (2E)-thiogeraniol + phosphate + diphosphate. The catalysed reaction is 5-methylaminomethyl-2-thiouridine(34) in tRNA + (2E)-geranyl diphosphate = 5-methylaminomethyl-S-(2E)-geranyl-thiouridine(34) in tRNA + diphosphate. It carries out the reaction 5-methylaminomethyl-S-(2E)-geranyl-thiouridine(34) in tRNA + selenophosphate + H(+) = 5-methylaminomethyl-2-(Se-phospho)selenouridine(34) in tRNA + (2E)-thiogeraniol. The enzyme catalyses 5-methylaminomethyl-2-(Se-phospho)selenouridine(34) in tRNA + H2O = 5-methylaminomethyl-2-selenouridine(34) in tRNA + phosphate. In terms of biological role, involved in the post-transcriptional modification of the uridine at the wobble position (U34) of tRNA(Lys), tRNA(Glu) and tRNA(Gln). Catalyzes the conversion of 2-thiouridine (S2U-RNA) to 2-selenouridine (Se2U-RNA). Acts in a two-step process involving geranylation of 2-thiouridine (S2U) to S-geranyl-2-thiouridine (geS2U) and subsequent selenation of the latter derivative to 2-selenouridine (Se2U) in the tRNA chain. This chain is tRNA 2-selenouridine synthase, found in Shewanella woodyi (strain ATCC 51908 / MS32).